The following is a 414-amino-acid chain: Tyrosine--tRNA ligase (414 aa).

Y38 serves as a coordination point for L-tyrosine. The short motif at 43 to 52 (PTATSLHLGN) is the 'HIGH' region element. The L-tyrosine site is built by Y165 and Q169. Residues 228-232 (KFGKS) carry the 'KMSKS' region motif. K231 is an ATP binding site. Residues 349-414 (FNANQIIDLG…KKYFFIIELI (66 aa)) form the S4 RNA-binding domain.

The protein belongs to the class-I aminoacyl-tRNA synthetase family. TyrS type 1 subfamily. As to quaternary structure, homodimer.

It localises to the cytoplasm. It catalyses the reaction tRNA(Tyr) + L-tyrosine + ATP = L-tyrosyl-tRNA(Tyr) + AMP + diphosphate + H(+). Functionally, catalyzes the attachment of tyrosine to tRNA(Tyr) in a two-step reaction: tyrosine is first activated by ATP to form Tyr-AMP and then transferred to the acceptor end of tRNA(Tyr). The protein is Tyrosine--tRNA ligase of Mesomycoplasma hyopneumoniae (strain 232) (Mycoplasma hyopneumoniae).